The following is a 212-amino-acid chain: Large ribosomal subunit protein bL25 (212 aa).

It belongs to the bacterial ribosomal protein bL25 family. CTC subfamily. Part of the 50S ribosomal subunit; part of the 5S rRNA/L5/L18/L25 subcomplex. Contacts the 5S rRNA. Binds to the 5S rRNA independently of L5 and L18.

This is one of the proteins that binds to the 5S RNA in the ribosome where it forms part of the central protuberance. This is Large ribosomal subunit protein bL25 from Leptospira interrogans serogroup Icterohaemorrhagiae serovar copenhageni (strain Fiocruz L1-130).